The following is a 445-amino-acid chain: MNRETSRELYDRSLDVLVGGVNSTVRAAPQPYPTFVQSGDGGHVIDADGNRYIDWVMGLGPLLLGHDLPQPVTAAIQRRASDGPLFGTPTEIEVEHAEFVARHVPSVELLRFVNSGTEATVSAVRLARGYTGRNKIVVMQGGYHGAQESTLVEGDADHRGPSSAGIPPAFAQHTIPVPFNDADAVTEVFETHGDDIAAVLVEPILANKGIVEPVAGYHETLRDLTHDHGALLIWDEVITGFRVGGLGCAQSEFDITPDVTTFGKIIGGGFPVGAIGGRTDVMEEFTPTGDVFQAGTFSGHPVTMAAGLETLQYAAENDVYEHVNRLGGRLREGLAAVVAEHAPAYTVVGRDSMFKVVFTRDGDAQSGACTDGCRQDPDCERHAACPKTGADVGDAAVQRWNRVFRPQLLDAGVLLSQNQFESQFVSYGHTEADVDETIEAYRSAL.

Lysine 264 carries the N6-(pyridoxal phosphate)lysine modification.

Belongs to the class-III pyridoxal-phosphate-dependent aminotransferase family. HemL subfamily. It depends on pyridoxal 5'-phosphate as a cofactor.

It localises to the cytoplasm. It carries out the reaction (S)-4-amino-5-oxopentanoate = 5-aminolevulinate. The protein operates within porphyrin-containing compound metabolism; protoporphyrin-IX biosynthesis; 5-aminolevulinate from L-glutamyl-tRNA(Glu): step 2/2. The polypeptide is Glutamate-1-semialdehyde 2,1-aminomutase (Halobacterium salinarum (strain ATCC 29341 / DSM 671 / R1)).